The chain runs to 238 residues: Ribosomal RNA small subunit methyltransferase G (238 aa).

Residues G77, F82, A128 to E129, and R147 each bind S-adenosyl-L-methionine. A disordered region spans residues R219–E238.

It belongs to the methyltransferase superfamily. RNA methyltransferase RsmG family.

It is found in the cytoplasm. Specifically methylates the N7 position of guanine in position 535 of 16S rRNA. The polypeptide is Ribosomal RNA small subunit methyltransferase G (Oceanobacillus iheyensis (strain DSM 14371 / CIP 107618 / JCM 11309 / KCTC 3954 / HTE831)).